The following is a 234-amino-acid chain: MNSLLITGTDTGAGKTIVTSALAAYWHKYYPSQRLGVIKLLQTGIGDHEHYQAMFAGQESVEVVCPLRFTTPVAPPIAAERENQPIPLEIVWKSLVSLQKSCDFVLAEGLGGLGSPVTWELTVADLAGEWRLPTVLVVPVKLGAIAQAVANVALARQTQVNLKGIILSCSHPLSPQELSDWAPMDLIQSLTGVPVLGVIPYLETIKDLDQLAKSASHLDLEPLISLDCRTQFLG.

12–17 provides a ligand contact to ATP; sequence GAGKTI. Position 16 (Thr-16) interacts with Mg(2+). Residue Lys-39 is part of the active site. Thr-43 serves as a coordination point for substrate. Residues Asp-47, 108 to 111, 168 to 169, and 200 to 202 each bind ATP; these read EGLG, SC, and PYL. Mg(2+) is bound by residues Asp-47 and Glu-108.

Belongs to the dethiobiotin synthetase family. In terms of assembly, homodimer. Mg(2+) is required as a cofactor.

It is found in the cytoplasm. It catalyses the reaction (7R,8S)-7,8-diammoniononanoate + CO2 + ATP = (4R,5S)-dethiobiotin + ADP + phosphate + 3 H(+). It carries out the reaction (7R,8S)-8-amino-7-(carboxyamino)nonanoate + ATP = (4R,5S)-dethiobiotin + ADP + phosphate + H(+). It functions in the pathway cofactor biosynthesis; biotin biosynthesis; biotin from 7,8-diaminononanoate: step 1/2. Catalyzes a mechanistically unusual reaction, the ATP-dependent insertion of CO2 between the N7 and N8 nitrogen atoms of 7,8-diaminopelargonic acid (DAPA, also called 7,8-diammoniononanoate) to form a ureido ring. This cyanobacterium does not encode bioA (which catalyzes the formation of the precursor for this reaction in the cannonical pathway), instead it encodes bioU, which replaces bioA and also performs the first half of the cannonical BioD reaction. Thus in this organism BioD has a different substrate. This chain is ATP-dependent dethiobiotin synthetase BioD, found in Rippkaea orientalis (strain PCC 8801 / RF-1) (Cyanothece sp. (strain PCC 8801)).